The following is a 1493-amino-acid chain: Mitogen-activated protein kinase kinase kinase 1 (1493 aa).

Composition is skewed to low complexity over residues 1-23 (MAAAAGDRASSSGFPGAAAASPE) and 33-42 (GSGAPAAGAG). Disordered regions lie at residues 1-171 (MAAA…DRPE) and 222-295 (LQGE…EETS). Ala-2 carries the post-translational modification N-acetylalanine. Residue Ser-21 is modified to Phosphoserine. Positions 84 to 94 (PPCPSTSPSPE) are enriched in pro residues. Low complexity-rich tracts occupy residues 95 to 108 (PADAAAGASGFQPA) and 135 to 151 (ARSPAGAEPPSAAAPSG). Ser-137 is subject to Phosphoserine. The segment covering 152–171 (REMENKETLKGLHKMDDRPE) has biased composition (basic and acidic residues). Over residues 230–257 (SAAPAPKGRRSPSPGSSPSGRSGKPESP) the composition is skewed to low complexity. Ser-265 bears the Phosphoserine mark. The residue at position 275 (Thr-275) is a Phosphothreonine. Phosphoserine occurs at positions 282, 287, and 290. Residues 328 to 356 (YRVFIGPQNCSCGRGTFCIHLLFVMLRVF) form an SWIM-type zinc finger. The RING-type zinc-finger motif lies at 433–482 (CPICLLGMLDEESLTVCEDGCRNKLHHHCMSIWAEECRRNREPLICPLCR). Polar residues predominate over residues 496–506 (SSPVDSPTSLR). Disordered regions lie at residues 496 to 524 (SSPVDSPTSLRGVQQPSSPQQPVAGSQRR), 866 to 910 (DTLD…LSAS), 923 to 955 (VGLPSSATTEQPKPTVQTKGRPHSQCLNSSPLS), and 992 to 1060 (PCKI…ASKN). A phosphoserine mark is found at Ser-497, Ser-521, and Ser-910. Residues 507–522 (GVQQPSSPQQPVAGSQ) are compositionally biased toward low complexity. 2 stretches are compositionally biased toward polar residues: residues 925-940 (LPSSATTEQPKPTVQT) and 998-1014 (ASPQTQRKFSLQFQRTC). Residues Ser-999 and Ser-1024 each carry the phosphoserine modification. Residues 1049–1060 (GSTSKLGDASKN) show a composition bias toward polar residues. A Protein kinase domain is found at 1224-1489 (WLKGQQIGLG…SRELLKHPVF (266 aa)). ATP contacts are provided by residues 1230–1238 (IGLGAFSSC) and Lys-1253. The Proton acceptor role is filled by Asp-1350. Phosphothreonine; by autocatalysis is present on residues Thr-1381 and Thr-1393.

It belongs to the protein kinase superfamily. STE Ser/Thr protein kinase family. MAP kinase kinase kinase subfamily. In terms of assembly, binds both upstream activators and downstream substrates in multimolecular complexes through its N-terminus. Oligomerizes after binding MAP4K2 or TRAF2. Interacts (via the kinase catalytic domain) with STK38. Interacts with GRIPAP1. Mg(2+) serves as cofactor. Post-translationally, autophosphorylated. Most highly expressed in spleen, kidney and lung.

Its subcellular location is the membrane. It catalyses the reaction L-seryl-[protein] + ATP = O-phospho-L-seryl-[protein] + ADP + H(+). It carries out the reaction L-threonyl-[protein] + ATP = O-phospho-L-threonyl-[protein] + ADP + H(+). With respect to regulation, activated by autophosphorylation on Thr-1381 and Thr-1393 following oligomerization. Functionally, component of a protein kinase signal transduction cascade. Activates the ERK and JNK kinase pathways by phosphorylation of MAP2K1 and MAP2K4. May phosphorylate the MAPK8/JNK1 kinase. Activates CHUK and IKBKB, the central protein kinases of the NF-kappa-B pathway. This is Mitogen-activated protein kinase kinase kinase 1 (Map3k1) from Rattus norvegicus (Rat).